A 264-amino-acid polypeptide reads, in one-letter code: Acyl-[acyl-carrier-protein]--UDP-N-acetylglucosamine O-acyltransferase (264 aa).

It belongs to the transferase hexapeptide repeat family. LpxA subfamily. In terms of assembly, homotrimer.

It localises to the cytoplasm. The catalysed reaction is a (3R)-hydroxyacyl-[ACP] + UDP-N-acetyl-alpha-D-glucosamine = a UDP-3-O-[(3R)-3-hydroxyacyl]-N-acetyl-alpha-D-glucosamine + holo-[ACP]. The protein operates within glycolipid biosynthesis; lipid IV(A) biosynthesis; lipid IV(A) from (3R)-3-hydroxytetradecanoyl-[acyl-carrier-protein] and UDP-N-acetyl-alpha-D-glucosamine: step 1/6. Its function is as follows. Involved in the biosynthesis of lipid A, a phosphorylated glycolipid that anchors the lipopolysaccharide to the outer membrane of the cell. The protein is Acyl-[acyl-carrier-protein]--UDP-N-acetylglucosamine O-acyltransferase of Rickettsia rickettsii.